Consider the following 294-residue polypeptide: Indole-3-glycerol phosphate synthase (294 aa).

Belongs to the TrpC family.

The catalysed reaction is 1-(2-carboxyphenylamino)-1-deoxy-D-ribulose 5-phosphate + H(+) = (1S,2R)-1-C-(indol-3-yl)glycerol 3-phosphate + CO2 + H2O. It participates in amino-acid biosynthesis; L-tryptophan biosynthesis; L-tryptophan from chorismate: step 4/5. The polypeptide is Indole-3-glycerol phosphate synthase (Synechococcus sp. (strain RCC307)).